The sequence spans 356 residues: GMP reductase (356 aa).

NADP(+) contacts are provided by residues 26–27 (SR), Lys78, 132–134 (DVA), and 183–184 (IG). Positions 184, 186, and 189 each coordinate K(+). Cys189 functions as the Thioimidate intermediate in the catalytic mechanism. Thr191 (proton donor/acceptor) is an active-site residue. Arg192 is a K(+) binding site. GMP contacts are provided by residues 222-224 (DGG), 245-246 (GG), 271-273 (GMS), and 289-293 (RASEG). NADP(+) contacts are provided by residues Met272, 288–289 (YR), and 317–320 (SACT).

Belongs to the IMPDH/GMPR family.

The enzyme catalyses IMP + NH4(+) + NADP(+) = GMP + NADPH + 2 H(+). Its function is as follows. Catalyzes the irreversible NADPH-dependent deamination of GMP to IMP. It functions in the conversion of nucleobase, nucleoside and nucleotide derivatives of G to A nucleotides, and in maintaining the intracellular balance of A and G nucleotides. In Ascaris suum (Pig roundworm), this protein is GMP reductase.